The chain runs to 271 residues: MRAEPALLELKLDYRFNDPELLRRALTHSSLANENRPGAGVGSPLNDNEQLEFLGDSVLGFLIAEALVRRFPEYHEGDLSRLKAHLVSAAHLHGVARRLDLGSYLELGRSEEMSGGRTKKTLLVDGLEAIMAAIYLDGGVDAARAFVATHVLDAPFFGDEEAGTDIQPAITNFKSALQELAQTRRLPQPRYSVVRERGPEHSKTFTVEVRVGKEWTAQAEGRTKKIAAQRAARGLYERLMGDPIVPLPDDSPGDSPDDSGDAAESGVISAT.

The RNase III domain occupies 5–139 (PALLELKLDY…IMAAIYLDGG (135 aa)). Residue Glu52 participates in Mg(2+) binding. Asp56 is a catalytic residue. Residues Asp125 and Glu128 each coordinate Mg(2+). Glu128 is a catalytic residue. Positions 172–241 (NFKSALQELA…ARGLYERLMG (70 aa)) constitute a DRBM domain. A disordered region spans residues 241–271 (GDPIVPLPDDSPGDSPDDSGDAAESGVISAT). A compositionally biased stretch (acidic residues) spans 251–261 (SPGDSPDDSGD).

Belongs to the ribonuclease III family. Homodimer. Mg(2+) serves as cofactor.

Its subcellular location is the cytoplasm. It catalyses the reaction Endonucleolytic cleavage to 5'-phosphomonoester.. Digests double-stranded RNA. Involved in the processing of primary rRNA transcript to yield the immediate precursors to the large and small rRNAs (23S and 16S). Processes some mRNAs, and tRNAs when they are encoded in the rRNA operon. Processes pre-crRNA and tracrRNA of type II CRISPR loci if present in the organism. The sequence is that of Ribonuclease 3 from Solibacter usitatus (strain Ellin6076).